Consider the following 349-residue polypeptide: Hydroxymethylglutaryl-CoA synthase (349 aa).

Residues Asp29 and Ala30 each contribute to the (3S)-3-hydroxy-3-methylglutaryl-CoA site. Glu81 serves as the catalytic Proton donor/acceptor. Residues Cys113 and Thr154 each coordinate (3S)-3-hydroxy-3-methylglutaryl-CoA. Catalysis depends on Cys113, which acts as the Acyl-thioester intermediate. A CoA-binding site is contributed by Arg202. Positions 204 and 237 each coordinate (3S)-3-hydroxy-3-methylglutaryl-CoA. The active-site Proton donor/acceptor is the His237. A CoA-binding site is contributed by Lys242. (3S)-3-hydroxy-3-methylglutaryl-CoA is bound by residues Arg246, Asn269, and Ser299.

The protein belongs to the thiolase-like superfamily. Archaeal HMG-CoA synthase family. As to quaternary structure, interacts with acetoacetyl-CoA thiolase that catalyzes the precedent step in the pathway and with a DUF35 protein. The acetoacetyl-CoA thiolase/HMG-CoA synthase complex channels the intermediate via a fused CoA-binding site, which allows for efficient coupling of the endergonic thiolase reaction with the exergonic HMGCS reaction.

The enzyme catalyses acetoacetyl-CoA + acetyl-CoA + H2O = (3S)-3-hydroxy-3-methylglutaryl-CoA + CoA + H(+). It functions in the pathway metabolic intermediate biosynthesis; (R)-mevalonate biosynthesis; (R)-mevalonate from acetyl-CoA: step 2/3. Its function is as follows. Catalyzes the condensation of acetyl-CoA with acetoacetyl-CoA to form 3-hydroxy-3-methylglutaryl-CoA (HMG-CoA). Functions in the mevalonate (MVA) pathway leading to isopentenyl diphosphate (IPP), a key precursor for the biosynthesis of isoprenoid compounds that are building blocks of archaeal membrane lipids. In Methanococcoides burtonii (strain DSM 6242 / NBRC 107633 / OCM 468 / ACE-M), this protein is Hydroxymethylglutaryl-CoA synthase.